The primary structure comprises 400 residues: Elongation factor Tu (400 aa).

A tr-type G domain is found at Lys-10–Gln-208. The tract at residues Gly-19–Ser-26 is G1. Position 19–26 (Gly-19–Ser-26) interacts with GTP. Ser-26 lines the Mg(2+) pocket. The segment at Gly-60 to Asn-64 is G2. Residues Asp-81–Gly-84 form a G3 region. Residues Asp-81–His-85 and Asn-136–Asp-139 each bind GTP. A G4 region spans residues Asn-136 to Asp-139. A G5 region spans residues Ser-174–Leu-176.

Belongs to the TRAFAC class translation factor GTPase superfamily. Classic translation factor GTPase family. EF-Tu/EF-1A subfamily. Monomer.

The protein localises to the cytoplasm. The enzyme catalyses GTP + H2O = GDP + phosphate + H(+). Its function is as follows. GTP hydrolase that promotes the GTP-dependent binding of aminoacyl-tRNA to the A-site of ribosomes during protein biosynthesis. This is Elongation factor Tu from Thermotoga neapolitana (strain ATCC 49049 / DSM 4359 / NBRC 107923 / NS-E).